The sequence spans 354 residues: Protein Wnt-11 (354 aa).

An N-terminal signal peptide occupies residues 1–24; sequence MKPSPQFLLAAFLSLILQTGICYG. N-linked (GlcNAc...) asparagine glycans are attached at residues asparagine 40 and asparagine 90. 11 cysteine pairs are disulfide-bonded: cysteine 80/cysteine 91, cysteine 130/cysteine 138, cysteine 140/cysteine 157, cysteine 209/cysteine 223, cysteine 211/cysteine 218, cysteine 283/cysteine 314, cysteine 299/cysteine 309, cysteine 313/cysteine 353, cysteine 329/cysteine 344, cysteine 331/cysteine 341, and cysteine 336/cysteine 337. Serine 215 carries the O-palmitoleoyl serine; by PORCN lipid modification. 2 N-linked (GlcNAc...) asparagine glycosylation sites follow: asparagine 300 and asparagine 304.

The protein belongs to the Wnt family. Post-translationally, palmitoleoylation is required for efficient binding to frizzled receptors. Depalmitoleoylation leads to Wnt signaling pathway inhibition.

The protein localises to the secreted. The protein resides in the extracellular space. Its subcellular location is the extracellular matrix. In terms of biological role, ligand for members of the frizzled family of seven transmembrane receptors. May play a role in the formation of dermal structure, both limb and feather buds. Is likely to signal over only few cell diameters. The polypeptide is Protein Wnt-11 (WNT11) (Coturnix japonica (Japanese quail)).